The sequence spans 500 residues: NAD(P)H-quinone oxidoreductase chain 4, chloroplastic (500 aa).

14 helical membrane-spanning segments follow: residues 4-24, 35-55, 87-107, 113-130, 134-154, 167-187, 211-231, 242-262, 272-292, 305-325, 330-350, 386-406, 416-436, and 462-482; these read FPWL…MLFL, YTIC…CYNF, IGTI…AFPV, LFHF…GSFS, LLLF…LLSM, FILY…GISL, ILFY…IPLH, HYST…YGLV, AHSM…IYAA, IAYS…SITD, GAIL…FLAG, LALP…GIIT, ILII…LLSM, and LFLS…PDFV.

It belongs to the complex I subunit 4 family.

It localises to the plastid. Its subcellular location is the chloroplast thylakoid membrane. The catalysed reaction is a plastoquinone + NADH + (n+1) H(+)(in) = a plastoquinol + NAD(+) + n H(+)(out). It carries out the reaction a plastoquinone + NADPH + (n+1) H(+)(in) = a plastoquinol + NADP(+) + n H(+)(out). This is NAD(P)H-quinone oxidoreductase chain 4, chloroplastic from Nasturtium officinale (Watercress).